Consider the following 124-residue polypeptide: NADPH-dependent 7-cyano-7-deazaguanine reductase (124 aa).

The Thioimide intermediate role is filled by C40. The active-site Proton donor is D47. Residues 62–64 (VEL) and 81–82 (HE) each bind substrate.

It belongs to the GTP cyclohydrolase I family. QueF type 1 subfamily.

It is found in the cytoplasm. The enzyme catalyses 7-aminomethyl-7-carbaguanine + 2 NADP(+) = 7-cyano-7-deazaguanine + 2 NADPH + 3 H(+). It functions in the pathway tRNA modification; tRNA-queuosine biosynthesis. Its function is as follows. Catalyzes the NADPH-dependent reduction of 7-cyano-7-deazaguanine (preQ0) to 7-aminomethyl-7-deazaguanine (preQ1). This Wolinella succinogenes (strain ATCC 29543 / DSM 1740 / CCUG 13145 / JCM 31913 / LMG 7466 / NCTC 11488 / FDC 602W) (Vibrio succinogenes) protein is NADPH-dependent 7-cyano-7-deazaguanine reductase.